The sequence spans 299 residues: uncharacterized protein (299 aa).

The interval Met1–Lys44 is disordered. Leu55–Ala79 lines the NADP(+) pocket. Residue Ser188 participates in substrate binding. Tyr201 acts as the Proton acceptor in catalysis.

It belongs to the short-chain dehydrogenases/reductases (SDR) family.

This is an uncharacterized protein from Bacillus subtilis (strain 168).